The primary structure comprises 94 residues: Translation initiation factor 1A 2 (94 aa).

The S1-like domain maps to Gly-6–Ser-80.

The protein belongs to the eIF-1A family.

In terms of biological role, seems to be required for maximal rate of protein biosynthesis. Enhances ribosome dissociation into subunits and stabilizes the binding of the initiator Met-tRNA(I) to 40 S ribosomal subunits. This is Translation initiation factor 1A 2 from Haloquadratum walsbyi (strain DSM 16790 / HBSQ001).